A 160-amino-acid chain; its full sequence is NADH-quinone oxidoreductase subunit B (160 aa).

[4Fe-4S] cluster contacts are provided by Cys-39, Cys-40, Cys-104, and Cys-135.

The protein belongs to the complex I 20 kDa subunit family. NDH-1 is composed of 14 different subunits. Subunits NuoB, C, D, E, F, and G constitute the peripheral sector of the complex. It depends on [4Fe-4S] cluster as a cofactor.

It localises to the cell membrane. The catalysed reaction is a quinone + NADH + 5 H(+)(in) = a quinol + NAD(+) + 4 H(+)(out). NDH-1 shuttles electrons from NADH, via FMN and iron-sulfur (Fe-S) centers, to quinones in the respiratory chain. The immediate electron acceptor for the enzyme in this species is believed to be a menaquinone. Couples the redox reaction to proton translocation (for every two electrons transferred, four hydrogen ions are translocated across the cytoplasmic membrane), and thus conserves the redox energy in a proton gradient. This chain is NADH-quinone oxidoreductase subunit B, found in Amoebophilus asiaticus (strain 5a2).